A 321-amino-acid polypeptide reads, in one-letter code: Lipoyl synthase (321 aa).

The [4Fe-4S] cluster site is built by Cys-68, Cys-73, Cys-79, Cys-94, Cys-98, Cys-101, and Ser-308. The Radical SAM core domain maps to 80–297 (FNHGTATFMI…KDVAMGLGFS (218 aa)).

The protein belongs to the radical SAM superfamily. Lipoyl synthase family. [4Fe-4S] cluster serves as cofactor.

It localises to the cytoplasm. The enzyme catalyses [[Fe-S] cluster scaffold protein carrying a second [4Fe-4S](2+) cluster] + N(6)-octanoyl-L-lysyl-[protein] + 2 oxidized [2Fe-2S]-[ferredoxin] + 2 S-adenosyl-L-methionine + 4 H(+) = [[Fe-S] cluster scaffold protein] + N(6)-[(R)-dihydrolipoyl]-L-lysyl-[protein] + 4 Fe(3+) + 2 hydrogen sulfide + 2 5'-deoxyadenosine + 2 L-methionine + 2 reduced [2Fe-2S]-[ferredoxin]. It functions in the pathway protein modification; protein lipoylation via endogenous pathway; protein N(6)-(lipoyl)lysine from octanoyl-[acyl-carrier-protein]: step 2/2. Functionally, catalyzes the radical-mediated insertion of two sulfur atoms into the C-6 and C-8 positions of the octanoyl moiety bound to the lipoyl domains of lipoate-dependent enzymes, thereby converting the octanoylated domains into lipoylated derivatives. This Aeromonas hydrophila subsp. hydrophila (strain ATCC 7966 / DSM 30187 / BCRC 13018 / CCUG 14551 / JCM 1027 / KCTC 2358 / NCIMB 9240 / NCTC 8049) protein is Lipoyl synthase.